We begin with the raw amino-acid sequence, 392 residues long: MVLQAIKYSRGQLEILDQLKLPHAEEYDHIYSSTDAWHAIKEMRTRGAPAIAIVAALALAVELSNMKLPSVAEEVKVFITEKLDYLVTSRPTAVNLADAAGKLQRITESAAASEGADGDSVREAYVSAAEKMLVDDVSDNESIGKHGAEWIMKNTEAGKKGPVSMMTHCNTGSLATAGYGTALGVIRSLHSAGSLKHAFCSETRPYNQGSRLTAFELVHDKIPATLITDSMAAALLRLRGESENIAGIVVGADRVAANGDTANKIGTYSLAILAKHHGVKFLVAAPRTTIDLKTKSGADIVIEERSGKEVTLVKGPRHDGVTLDLGVIETISIAANGIGVWNPAFDVTPAELIDGIITEVGVVEKDSNGVFHLDTVFKAEGSEVKPSTIGGL.

Residue Asp253 is the Proton donor of the active site.

This sequence belongs to the eIF-2B alpha/beta/delta subunits family. MtnA subfamily.

Its subcellular location is the cytoplasm. The protein resides in the nucleus. The catalysed reaction is 5-(methylsulfanyl)-alpha-D-ribose 1-phosphate = 5-(methylsulfanyl)-D-ribulose 1-phosphate. Its pathway is amino-acid biosynthesis; L-methionine biosynthesis via salvage pathway; L-methionine from S-methyl-5-thio-alpha-D-ribose 1-phosphate: step 1/6. Catalyzes the interconversion of methylthioribose-1-phosphate (MTR-1-P) into methylthioribulose-1-phosphate (MTRu-1-P). The sequence is that of Methylthioribose-1-phosphate isomerase (mri1) from Pyrenophora tritici-repentis (strain Pt-1C-BFP) (Wheat tan spot fungus).